We begin with the raw amino-acid sequence, 423 residues long: 3-phosphoshikimate 1-carboxyvinyltransferase (423 aa).

Lys20, Ser21, and Arg25 together coordinate 3-phosphoshikimate. Residue Lys20 coordinates phosphoenolpyruvate. Phosphoenolpyruvate is bound by residues Gly91 and Arg119. Residues Thr163, Ser164, Gln165, Asp305, Gln328, and Lys332 each contribute to the 3-phosphoshikimate site. Phosphoenolpyruvate is bound at residue Gln165. Asp305 functions as the Proton acceptor in the catalytic mechanism. Residues Arg336 and Arg377 each contribute to the phosphoenolpyruvate site.

Belongs to the EPSP synthase family. In terms of assembly, monomer.

The protein resides in the cytoplasm. The catalysed reaction is 3-phosphoshikimate + phosphoenolpyruvate = 5-O-(1-carboxyvinyl)-3-phosphoshikimate + phosphate. It functions in the pathway metabolic intermediate biosynthesis; chorismate biosynthesis; chorismate from D-erythrose 4-phosphate and phosphoenolpyruvate: step 6/7. Catalyzes the transfer of the enolpyruvyl moiety of phosphoenolpyruvate (PEP) to the 5-hydroxyl of shikimate-3-phosphate (S3P) to produce enolpyruvyl shikimate-3-phosphate and inorganic phosphate. The protein is 3-phosphoshikimate 1-carboxyvinyltransferase of Acetivibrio thermocellus (strain ATCC 27405 / DSM 1237 / JCM 9322 / NBRC 103400 / NCIMB 10682 / NRRL B-4536 / VPI 7372) (Clostridium thermocellum).